The sequence spans 190 residues: ATP synthase subunit b (190 aa).

Residues 24-44 form a helical membrane-spanning segment; the sequence is IVGSLICFVVILFFFWKLVLP.

Belongs to the ATPase B chain family. In terms of assembly, F-type ATPases have 2 components, F(1) - the catalytic core - and F(0) - the membrane proton channel. F(1) has five subunits: alpha(3), beta(3), gamma(1), delta(1), epsilon(1). F(0) has three main subunits: a(1), b(2) and c(10-14). The alpha and beta chains form an alternating ring which encloses part of the gamma chain. F(1) is attached to F(0) by a central stalk formed by the gamma and epsilon chains, while a peripheral stalk is formed by the delta and b chains.

It localises to the cell membrane. Functionally, f(1)F(0) ATP synthase produces ATP from ADP in the presence of a proton or sodium gradient. F-type ATPases consist of two structural domains, F(1) containing the extramembraneous catalytic core and F(0) containing the membrane proton channel, linked together by a central stalk and a peripheral stalk. During catalysis, ATP synthesis in the catalytic domain of F(1) is coupled via a rotary mechanism of the central stalk subunits to proton translocation. Its function is as follows. Component of the F(0) channel, it forms part of the peripheral stalk, linking F(1) to F(0). The polypeptide is ATP synthase subunit b (Leifsonia xyli subsp. xyli (strain CTCB07)).